Here is a 426-residue protein sequence, read N- to C-terminus: Serine protease HTRA2, mitochondrial (426 aa).

The span at 31–58 shows a compositional bias: low complexity; the sequence is SSTCNSTNTDNGSHNTNYNSSNNNNNNN. The segment at 31–59 is disordered; that stretch reads SSTCNSTNTDNGSHNTNYNSSNNNNNNND. A helical membrane pass occupies residues 71–87; sequence FLVPFSLGALASSVVAG. The IAP-binding motif lies at 79–82; it reads ALAS. A serine protease region spans residues 143–306; that stretch reads SNGSGFVIEQ…IPIDYVKLFL (164 aa). Catalysis depends on charge relay system residues H161, D193, and S270. The 86-residue stretch at 329–414 folds into the PDZ domain; sequence MGITMLTLTP…DLDMVILRGV (86 aa).

This sequence belongs to the peptidase S1C family. In terms of assembly, interacts with th/DIAP1 (via BIR 2 domain).

It localises to the mitochondrion intermembrane space. The protein resides in the mitochondrion membrane. The catalysed reaction is Cleavage of non-polar aliphatic amino-acids at the P1 position, with a preference for Val, Ile and Met. At the P2 and P3 positions, Arg is selected most strongly with a secondary preference for other hydrophilic residues.. In terms of biological role, serine protease that shows proteolytic activity against a non-specific substrate beta-casein. Promotes or induces cell death either by direct binding to and inhibition of BIRC proteins (also called inhibitor of apoptosis proteins, IAPs), leading to an increase in caspase activity, or by a BIRC inhibition-independent, caspase-independent and serine protease activity-dependent mechanism. Can antagonize antiapoptotic activity of th/Diap1 by directly inducing the degradation of th/Diap1. This Drosophila grimshawi (Hawaiian fruit fly) protein is Serine protease HTRA2, mitochondrial.